We begin with the raw amino-acid sequence, 1036 residues long: Lethal(2) giant larvae protein homolog 1 (1036 aa).

10 WD repeats span residues 38–71 (SALA…FTGL), 78–119 (VTQM…GLSF), 139–175 (VTVV…GQTL), 199–233 (SLQG…EHVF), 239–271 (LESL…GSPP), 289–331 (AINK…ETLV), 339–373 (VIDF…VLDL), 395–473 (TCSA…YKLS), 517–592 (QKVA…RMLI), and 601–662 (TAVT…LRQS). Position 662 is a phosphoserine (S662). Positions 667–677 (RKSRVSGKKRT) are enriched in basic residues. Positions 667 to 688 (RKSRVSGKKRTPAASSKLQEAN) are disordered. Residues 679-688 (AASSKLQEAN) are compositionally biased toward polar residues. WD repeat units lie at residues 722–782 (VRCL…KEVQ), 791–843 (AIAV…VSAK), 848–901 (LTAH…VHYS), and 915–938 (VFTR…SLSA). T957 carries the phosphothreonine modification. Phosphoserine is present on residues S964, S982, and S989. A disordered region spans residues 980–1002 (PESCEGSPSSAHSKRADTMEPPE).

Belongs to the WD repeat L(2)GL family. In terms of assembly, associated with nonmuscle myosin II heavy chain. Interacts with PRKCI/aPKC, PARD6B/Par-6 and PARD6A. Interacts with STX4A. Interacts with RAB10 (GDP-bound form); the interaction is direct and promotes RAB10 association with membranes and activation through competition with the Rab inhibitor GDI1. Interacts with DCAF1. In terms of processing, phosphorylated by PRKCI. Widely expressed. Expressed in brain, ovary, testis, with moderate expression in lever, uterus, lung and kidney.

It is found in the early endosome membrane. It localises to the golgi apparatus. The protein resides in the trans-Golgi network membrane. Its subcellular location is the cell projection. The protein localises to the axon. It is found in the golgi apparatus membrane. It localises to the cytoplasm. The protein resides in the cytoskeleton. Its function is as follows. Cortical cytoskeleton protein found in a complex involved in maintaining cell polarity and epithelial integrity. Involved in the regulation of mitotic spindle orientation, proliferation, differentiation and tissue organization of neuroepithelial cells. Involved in axonogenesis through RAB10 activation thereby regulating vesicular membrane trafficking toward the axonal plasma membrane. The chain is Lethal(2) giant larvae protein homolog 1 (LLGL1) from Bos taurus (Bovine).